The primary structure comprises 247 residues: MTTLFISDLHLDPARPAITELFLDFLRTQVRGSDALYILGDLFEAWIGDDTPSTAADAVAVALHAVADAGVPVFFMAGNRDFLVGETYAQRAGFRILPDPTVIDLYGHTTLLMHGDLLCTDDTAYQAFRAQTRDPVFQAQFLAQPLAARVAFAQQARAASQARHAELKQGDQSNVETVTDVSPAEVEATFVRYGLDRLIHGHTHRPAIHTVQAGGNTCTRIVLGDWYEQGSVLRLDADGVSLEQFAL.

The Mn(2+) site is built by Asp-8, His-10, Asp-41, Asn-79, and His-114. Substrate is bound at residue 79-80 (NR). Residues Asp-122, Ser-160, Asp-171, Asn-174, and His-202 each coordinate substrate. Mn(2+)-binding residues include His-202 and His-204.

The protein belongs to the LpxH family. The cofactor is Mn(2+).

Its subcellular location is the cell inner membrane. The catalysed reaction is UDP-2-N,3-O-bis[(3R)-3-hydroxytetradecanoyl]-alpha-D-glucosamine + H2O = 2-N,3-O-bis[(3R)-3-hydroxytetradecanoyl]-alpha-D-glucosaminyl 1-phosphate + UMP + 2 H(+). The protein operates within glycolipid biosynthesis; lipid IV(A) biosynthesis; lipid IV(A) from (3R)-3-hydroxytetradecanoyl-[acyl-carrier-protein] and UDP-N-acetyl-alpha-D-glucosamine: step 4/6. Functionally, hydrolyzes the pyrophosphate bond of UDP-2,3-diacylglucosamine to yield 2,3-diacylglucosamine 1-phosphate (lipid X) and UMP by catalyzing the attack of water at the alpha-P atom. Involved in the biosynthesis of lipid A, a phosphorylated glycolipid that anchors the lipopolysaccharide to the outer membrane of the cell. The protein is UDP-2,3-diacylglucosamine hydrolase of Xanthomonas oryzae pv. oryzae (strain MAFF 311018).